The following is a 299-amino-acid chain: Glycine--tRNA ligase alpha subunit (299 aa).

It belongs to the class-II aminoacyl-tRNA synthetase family. Tetramer of two alpha and two beta subunits.

It is found in the cytoplasm. The catalysed reaction is tRNA(Gly) + glycine + ATP = glycyl-tRNA(Gly) + AMP + diphosphate. The sequence is that of Glycine--tRNA ligase alpha subunit from Desulforapulum autotrophicum (strain ATCC 43914 / DSM 3382 / VKM B-1955 / HRM2) (Desulfobacterium autotrophicum).